Reading from the N-terminus, the 405-residue chain is Alpha-1-antiproteinase S (405 aa).

The signal sequence occupies residues M1–A24. N57, N94, N157, and N258 each carry an N-linked (GlcNAc...) asparagine glycan. Residues G360–K379 form an RCL region.

It belongs to the serpin family.

It localises to the secreted. Functionally, inhibits elastase, chymotrypsin, cathepsin G, plasmin, and trypsin. The protein is Alpha-1-antiproteinase S of Cavia porcellus (Guinea pig).